The sequence spans 583 residues: uncharacterized protein (583 aa).

This is an uncharacterized protein from Acanthamoeba polyphaga (Amoeba).